Consider the following 282-residue polypeptide: N-acetylaspartate synthetase (282 aa).

A helical membrane pass occupies residues 103–125; sequence FLTVMCYVMTKSFTLTFCAPFIL. In terms of domain architecture, N-acetyltransferase spans 110–269; sequence VMTKSFTLTF…RSPLERLFFQ (160 aa).

Belongs to the NAT8 family.

The protein resides in the cytoplasm. The protein localises to the microsome membrane. Its subcellular location is the mitochondrion membrane. It localises to the endoplasmic reticulum membrane. The catalysed reaction is L-aspartate + acetyl-CoA = N-acetyl-L-aspartate + CoA + H(+). Catalyzes the synthesis of N-acetylaspartate acid (NAA) from L-aspartate and acetyl-CoA. The chain is N-acetylaspartate synthetase (nat8l) from Danio rerio (Zebrafish).